The primary structure comprises 336 residues: WAT1-related protein At2g37450 (336 aa).

9 helical membrane-spanning segments follow: residues 7–27 (ALPF…DILT), 45–65 (HGVA…PVIA), 79–99 (TFAI…ALIF), 115–135 (VVGT…KGPA), 160–180 (GAVL…LQAI), 189–209 (LSLA…VALV), 227–247 (LTIT…GGVV), 255–275 (FVTA…SIIF), and 279–299 (MYLG…LVIW). EamA domains are found at residues 63–126 (VIAQ…GGIM) and 169–298 (FSYA…YLVI).

This sequence belongs to the drug/metabolite transporter (DMT) superfamily. Plant drug/metabolite exporter (P-DME) (TC 2.A.7.4) family.

It is found in the membrane. The polypeptide is WAT1-related protein At2g37450 (Arabidopsis thaliana (Mouse-ear cress)).